We begin with the raw amino-acid sequence, 316 residues long: HPr kinase/phosphorylase (316 aa).

Active-site residues include H143 and K164. An ATP-binding site is contributed by 158 to 165 (GEAGSGKS). A Mg(2+)-binding site is contributed by S165. The active-site Proton acceptor; for phosphorylation activity. Proton donor; for dephosphorylation activity is the D182. Positions 206 to 215 (LEVRGLGVLN) are important for the catalytic mechanism of both phosphorylation and dephosphorylation. A Mg(2+)-binding site is contributed by E207. Residue R251 is part of the active site. Positions 272–277 (PVMPGR) are important for the catalytic mechanism of dephosphorylation.

This sequence belongs to the HPrK/P family. As to quaternary structure, homohexamer. Mg(2+) serves as cofactor.

The enzyme catalyses [HPr protein]-L-serine + ATP = [HPr protein]-O-phospho-L-serine + ADP + H(+). The catalysed reaction is [HPr protein]-O-phospho-L-serine + phosphate + H(+) = [HPr protein]-L-serine + diphosphate. Catalyzes the ATP- as well as the pyrophosphate-dependent phosphorylation of a specific serine residue in HPr, a phosphocarrier protein of the phosphoenolpyruvate-dependent sugar phosphotransferase system (PTS). HprK/P also catalyzes the pyrophosphate-producing, inorganic phosphate-dependent dephosphorylation (phosphorolysis) of seryl-phosphorylated HPr (P-Ser-HPr). The chain is HPr kinase/phosphorylase from Xylella fastidiosa (strain 9a5c).